A 490-amino-acid polypeptide reads, in one-letter code: Argininosuccinate lyase (490 aa).

Belongs to the lyase 1 family. Argininosuccinate lyase subfamily.

The protein resides in the cytoplasm. The catalysed reaction is 2-(N(omega)-L-arginino)succinate = fumarate + L-arginine. It functions in the pathway amino-acid biosynthesis; L-arginine biosynthesis; L-arginine from L-ornithine and carbamoyl phosphate: step 3/3. This is Argininosuccinate lyase from Bifidobacterium longum (strain DJO10A).